The chain runs to 132 residues: Transmembrane protein C1orf162 homolog (132 aa).

A helical transmembrane segment spans residues 36–56 (IILAFFAGVLLTLLIVALIFL). The tract at residues 95–132 (TFKPPEENSNDLTRNHSSGLEPTIYSQIKVTDSDLPLP) is disordered. Positions 104 to 124 (NDLTRNHSSGLEPTIYSQIKV) are enriched in polar residues. Residue Ser111 is modified to Phosphoserine.

The protein localises to the membrane. This is Transmembrane protein C1orf162 homolog from Mus musculus (Mouse).